We begin with the raw amino-acid sequence, 146 residues long: Large ribosomal subunit protein uL16c (146 aa).

Belongs to the universal ribosomal protein uL16 family. In terms of assembly, part of the 50S ribosomal subunit.

The protein localises to the plastid. Its subcellular location is the chloroplast. This is Large ribosomal subunit protein uL16c from Angiopteris evecta (Mule's foot fern).